Here is a 348-residue protein sequence, read N- to C-terminus: Rhodopsin (348 aa).

At methionine 1 the chain carries N-acetylmethionine. The Extracellular portion of the chain corresponds to 1-36 (MNGTEGPNFYVPFSNKTGVVRSPFEYPQYYLAEPWQ). Asparagine 2 and asparagine 15 each carry an N-linked (GlcNAc...) asparagine glycan. The chain crosses the membrane as a helical span at residues 37–61 (FSMLAAYMFLLIVLGFPINFLTLYV). Topologically, residues 62 to 73 (TVQHKKLRTPLN) are cytoplasmic. Residues 74–96 (YILLNLAVADLFMVFGGFTTTLY) traverse the membrane as a helical segment. Residues 97 to 110 (TSLHGYFVFGPTGC) lie on the Extracellular side of the membrane. Cysteine 110 and cysteine 187 form a disulfide bridge. A helical membrane pass occupies residues 111-133 (NVEGFFATLGGEIALWSLVVLAI). Residues 134 to 136 (ERY) carry the 'Ionic lock' involved in activated form stabilization motif. Residues 134–152 (ERYVVVCKPMSNFRFGENH) are Cytoplasmic-facing. The chain crosses the membrane as a helical span at residues 153-173 (AIMGVAFTWVMALACAAPPLA). The Extracellular portion of the chain corresponds to 174–202 (GWSRYIPEGMQCSCGIDYYTLKPEVNNES). A Zn(2+)-binding site is contributed by glutamate 201. A helical transmembrane segment spans residues 203-224 (FVIYMFVVHFTIPMIVIFFCYG). Residues 225–252 (QLVFTVKEAAAQQQESATTQKAEKEVTR) lie on the Cytoplasmic side of the membrane. The chain crosses the membrane as a helical span at residues 253 to 274 (MVIIMVIAFLICWVPYASVAFY). Topologically, residues 275 to 286 (IFTHQGSNFGPI) are extracellular. Glutamine 279 is a binding site for Zn(2+). The chain crosses the membrane as a helical span at residues 287-308 (FMTLPAFFAKSASIYNPVIYIM). Lysine 296 is subject to N6-(retinylidene)lysine. Residues 309-348 (MNKQFRNCMLTTICCGKNPFAEEEGATTVSKTETSQVAPA) lie on the Cytoplasmic side of the membrane. Residues cysteine 322 and cysteine 323 are each lipidated (S-palmitoyl cysteine). The interaction with SAG stretch occupies residues 330-348 (EEEGATTVSKTETSQVAPA). Phosphothreonine is present on residues threonine 335 and threonine 336. Serine 338 carries the phosphoserine modification. Threonine 340 and threonine 342 each carry phosphothreonine. Phosphoserine is present on serine 343.

Belongs to the G-protein coupled receptor 1 family. Opsin subfamily. As to quaternary structure, homodimer. May form a complex composed of RHO, GRK1 and RCVRN in a Ca(2+)-dependent manner; RCVRN prevents the interaction between GRK1 and RHO. Interacts with GRK1. Interacts (phosphorylated form) with SAG. Interacts with GNAT1. Interacts with GNAT3. SAG and G-proteins compete for a common binding site. Interacts with PRCD; the interaction promotes PRCD stability. Forms a complex with ASAP1 and ARF4. Forms a complex with ASAP1, RAB11A, Rabin8/RAB3IP, ARF4 and RAB11FIP3; the complex regulates Golgi-to-cilia rhodopsin/RHO transport in photoreceptors. Post-translationally, phosphorylated on some or all of the serine and threonine residues present in the C-terminal region. In terms of processing, contains one covalently linked retinal chromophore. Upon light absorption, the covalently bound 11-cis-retinal is converted to all-trans-retinal. After hydrolysis of the Schiff base and release of the covalently bound all-trans-retinal, active rhodopsin is regenerated by binding of a fresh molecule of 11-cis-retinal.

It localises to the membrane. It is found in the cell projection. The protein resides in the cilium. Its subcellular location is the photoreceptor outer segment. Its function is as follows. Photoreceptor required for image-forming vision at low light intensity. Required for photoreceptor cell viability after birth. Light-induced isomerization of 11-cis to all-trans retinal triggers a conformational change that activates signaling via G-proteins. Subsequent receptor phosphorylation mediates displacement of the bound G-protein alpha subunit by the arrestin SAG and terminates signaling. The sequence is that of Rhodopsin (RHO) from Trichechus manatus (Caribbean manatee).